Reading from the N-terminus, the 122-residue chain is MSEQKRRTIQIAISEDHYEELQKALELLKGTQLPFSTTVEQFVELILSNYVATSNKISSLAKSGFDVASLQQELEKIGNLSGVDDNLKGFLSELLKTSRNGFSNPNKDGKKNDDDNNSSSKS.

The tract at residues 97 to 122 is disordered; that stretch reads TSRNGFSNPNKDGKKNDDDNNSSSKS.

This is an uncharacterized protein from Mycoplasma genitalium (strain ATCC 33530 / DSM 19775 / NCTC 10195 / G37) (Mycoplasmoides genitalium).